Here is a 248-residue protein sequence, read N- to C-terminus: Functional amyloid sbunit FapE (248 aa).

Positions 1 to 20 (MNTSRWLTALCLAASMPAYA) are cleaved as a signal peptide.

It belongs to the FapE family. A minor component of purified amyloid fibrils. Fibrils are resistant to boiling in 2% (weight/vol) SDS and require &gt;90% (vol/vol) formic acid to dissolve.

It localises to the fimbrium. The protein resides in the secreted. Functionally, a minor component of the functional amyloid in this bacterium. Upon overexpression of the endogenous six-gene locus (fapA-fapF) in situ, cells form large clumps during liquid growth, make large amounts of biofilm and produce amyloid fibrils. Expression of the 6 gene operon in E.coli strain BL21(DE3) induces flocculation and biofilm formation with copious extracellular fibrils. This is Functional amyloid sbunit FapE from Pseudomonas fluorescens.